A 524-amino-acid polypeptide reads, in one-letter code: Cytochrome P450 CYP749A22 (524 aa).

A helical transmembrane segment spans residues 12-32; that stretch reads TPILFQFLLSSLCVFLLFVFI. A heme-binding site is contributed by Cys472.

Belongs to the cytochrome P450 family. The cofactor is heme.

It is found in the membrane. In terms of biological role, probable heme-thiolate monooxygenase. The chain is Cytochrome P450 CYP749A22 from Panax ginseng (Korean ginseng).